The chain runs to 256 residues: tRNA (guanine-N(7)-)-methyltransferase (256 aa).

Residues 1–25 (MVATGGQAQDQSQNQEPDVLNPTSA) form a disordered region. Residues G79, 102–103 (EI), 137–138 (NA), and L157 contribute to the S-adenosyl-L-methionine site. Residue D160 is part of the active site. 235-237 (SEE) contributes to the S-adenosyl-L-methionine binding site.

This sequence belongs to the class I-like SAM-binding methyltransferase superfamily. TrmB family.

Its subcellular location is the nucleus. The enzyme catalyses guanosine(46) in tRNA + S-adenosyl-L-methionine = N(7)-methylguanosine(46) in tRNA + S-adenosyl-L-homocysteine. It participates in tRNA modification; N(7)-methylguanine-tRNA biosynthesis. Functionally, catalyzes the formation of N(7)-methylguanine at position 46 (m7G46) in tRNA. This Drosophila simulans (Fruit fly) protein is tRNA (guanine-N(7)-)-methyltransferase.